Consider the following 637-residue polypeptide: ATP-dependent RNA helicase DBP6 (637 aa).

The disordered stretch occupies residues 1-93 (MFAVRFDPSQ…AASDHPDKHN (93 aa)). The segment covering 33–84 (DEEDESSEEETESSEDEEEKEKEEVADEDSMDVDDESSGDDDEEAEEGEVDA) has biased composition (acidic residues). A Q motif motif is present at residues 198-206 (TFPIQSILL). The 181-residue stretch at 222 to 402 (KNFTRRVGDV…GLQFYNPKLF (181 aa)) folds into the Helicase ATP-binding domain. Residue 235-242 (ASTGSGKT) participates in ATP binding. The DEAD box signature appears at 342–345 (DEAD). Residues 434-608 (FLLRLLSEIN…EGQEEEAQVL (175 aa)) form the Helicase C-terminal domain.

It belongs to the DEAD box helicase family. DDX51/DBP6 subfamily. Associated with pre-ribosomal particles.

The protein localises to the nucleus. Its subcellular location is the nucleolus. The enzyme catalyses ATP + H2O = ADP + phosphate + H(+). Its function is as follows. ATP-binding RNA helicase involved in the biogenesis of 60S ribosomal subunits and is required for the normal formation of 25S and 5.8S rRNAs. The protein is ATP-dependent RNA helicase DBP6 (DBP6) of Vanderwaltozyma polyspora (strain ATCC 22028 / DSM 70294 / BCRC 21397 / CBS 2163 / NBRC 10782 / NRRL Y-8283 / UCD 57-17) (Kluyveromyces polysporus).